The chain runs to 275 residues: Putative Ig-like V-type domain-containing protein FPV055 (275 aa).

Ig-like V-type domains lie at lysine 25–glycine 122 and proline 140–serine 239.

This Fowlpox virus (strain NVSL) (FPV) protein is Putative Ig-like V-type domain-containing protein FPV055.